The primary structure comprises 291 residues: Nitrogenase iron protein (291 aa).

Residue 11 to 18 (GKGGIGKS) coordinates ATP. Residue Cys99 coordinates [4Fe-4S] cluster. The residue at position 102 (Arg102) is an ADP-ribosylarginine; by dinitrogenase reductase ADP-ribosyltransferase. Cys133 provides a ligand contact to [4Fe-4S] cluster.

This sequence belongs to the NifH/BchL/ChlL family. Homodimer. The cofactor is [4Fe-4S] cluster. Post-translationally, the reversible ADP-ribosylation of Arg-102 inactivates the nitrogenase reductase and regulates nitrogenase activity.

It catalyses the reaction N2 + 8 reduced [2Fe-2S]-[ferredoxin] + 16 ATP + 16 H2O = H2 + 8 oxidized [2Fe-2S]-[ferredoxin] + 2 NH4(+) + 16 ADP + 16 phosphate + 6 H(+). Functionally, the key enzymatic reactions in nitrogen fixation are catalyzed by the nitrogenase complex, which has 2 components: the iron protein and the molybdenum-iron protein. The chain is Nitrogenase iron protein from Cereibacter sphaeroides (strain ATCC 17023 / DSM 158 / JCM 6121 / CCUG 31486 / LMG 2827 / NBRC 12203 / NCIMB 8253 / ATH 2.4.1.) (Rhodobacter sphaeroides).